We begin with the raw amino-acid sequence, 421 residues long: UDP-N-acetylglucosamine 1-carboxyvinyltransferase (421 aa).

22 to 23 (KN) is a binding site for phosphoenolpyruvate. Residue Arg93 participates in UDP-N-acetyl-alpha-D-glucosamine binding. The active-site Proton donor is Cys117. The residue at position 117 (Cys117) is a 2-(S-cysteinyl)pyruvic acid O-phosphothioketal. UDP-N-acetyl-alpha-D-glucosamine-binding positions include 122–126 (RPVDL), Asp308, and Ile330.

This sequence belongs to the EPSP synthase family. MurA subfamily.

It is found in the cytoplasm. The catalysed reaction is phosphoenolpyruvate + UDP-N-acetyl-alpha-D-glucosamine = UDP-N-acetyl-3-O-(1-carboxyvinyl)-alpha-D-glucosamine + phosphate. It participates in cell wall biogenesis; peptidoglycan biosynthesis. In terms of biological role, cell wall formation. Adds enolpyruvyl to UDP-N-acetylglucosamine. The sequence is that of UDP-N-acetylglucosamine 1-carboxyvinyltransferase from Pseudomonas putida (strain GB-1).